The following is a 302-amino-acid chain: Ornithine carbamoyltransferase (302 aa).

Residues Ser-52 to Thr-55, Gln-79, Arg-103, and His-130 to Gln-133 contribute to the carbamoyl phosphate site. Residues Asn-161, Asp-221, and Ser-225 to Met-226 each bind L-ornithine. Carbamoyl phosphate contacts are provided by residues Cys-261–Leu-262 and Arg-289.

This sequence belongs to the aspartate/ornithine carbamoyltransferase superfamily. OTCase family.

The protein localises to the cytoplasm. It catalyses the reaction carbamoyl phosphate + L-ornithine = L-citrulline + phosphate + H(+). Its pathway is amino-acid biosynthesis; L-arginine biosynthesis; L-arginine from L-ornithine and carbamoyl phosphate: step 1/3. Functionally, reversibly catalyzes the transfer of the carbamoyl group from carbamoyl phosphate (CP) to the N(epsilon) atom of ornithine (ORN) to produce L-citrulline. The polypeptide is Ornithine carbamoyltransferase (Methanosarcina acetivorans (strain ATCC 35395 / DSM 2834 / JCM 12185 / C2A)).